We begin with the raw amino-acid sequence, 509 residues long: Maturase K (509 aa).

It belongs to the intron maturase 2 family. MatK subfamily.

It is found in the plastid. The protein localises to the chloroplast. Its function is as follows. Usually encoded in the trnK tRNA gene intron. Probably assists in splicing its own and other chloroplast group II introns. This chain is Maturase K, found in Clematis lasiantha (Pipestem clematis).